A 211-amino-acid chain; its full sequence is ATP phosphoribosyltransferase (211 aa).

The protein belongs to the ATP phosphoribosyltransferase family. Short subfamily. In terms of assembly, heteromultimer composed of HisG and HisZ subunits.

It localises to the cytoplasm. The catalysed reaction is 1-(5-phospho-beta-D-ribosyl)-ATP + diphosphate = 5-phospho-alpha-D-ribose 1-diphosphate + ATP. It functions in the pathway amino-acid biosynthesis; L-histidine biosynthesis; L-histidine from 5-phospho-alpha-D-ribose 1-diphosphate: step 1/9. Functionally, catalyzes the condensation of ATP and 5-phosphoribose 1-diphosphate to form N'-(5'-phosphoribosyl)-ATP (PR-ATP). Has a crucial role in the pathway because the rate of histidine biosynthesis seems to be controlled primarily by regulation of HisG enzymatic activity. The protein is ATP phosphoribosyltransferase of Sorangium cellulosum (strain So ce56) (Polyangium cellulosum (strain So ce56)).